Consider the following 1011-residue polypeptide: MMMSNLKLGVDVIGAHNLFPKDGQGTSNAYVELYFDGQKHRTTIKDRDLNPVWNESFFFNISDPSRLHYLNLEAQAYSHNRSTNGRSFLGKVSLSGTSFVPHSDAVVLHFPMERRGIFSRVRGELGLKVYITDEASLKSSAASNDHPDNLDPALPRAMNVEHRSDKRHVFYNLPNSAQEHQHQHPQGPNQSSSLAAEQDNHNEHHHHYVPKHQVDEMRSEPARPSKLVHAHSIASAQPADFALKETSPHLGGGRVVGGRVIHKDKTATSTYDLVERMYFLYVRVVKARELPIMDITGSVDPFVEVRVGNYKGITRHFEKRQHPEWNQVFAFAKERMQASVLEVVVKDKDLLKDDYVGFVRFDINDVPLRVPPDSPLAPQWYRLEDKKGEKIKGELMLAVWIGTQADEAFSDAWHSDAAMPVDCSPAISAVLRSKVYHAPRLWYVRVNVIEAQDLIPTDKTRFPDVYVKAQLGNQVMKTRPCQARTLGAVWNEDFLFVVAEPFEDHLVLTVEDRVAPGKDEIVGRTYIPLNTVEKRADDHMIHARWYNLERPVIVDVDQLKREKFSMRIHLRVCLEGGYHVLDESTHYSSDLRPSARPLWRQPIGVLELGILNAVGLHPMKTREGRGTSDTFCVGKYGQKWVRTRTMVDNLCPKYNEQYTWEVFDPATVLTVGVFDNGQLGEKGNRDVKIGKIRIRLSTLETGRIYTHSYPLLVLHPTGVKKMGELHMAVRFTCISFANMLYQYSKPLLPKMHYVRPFSVMQQDMLRHQAVNIVAARLGRAEPPLRKEIIEFMSDTDSHLWSMRKSKANFFRMMTVFSGVIAVGKWFSDICSWRNPITTVLVHVLFLMLVCLPELILPTMFLYMFLIGLWNYRFRPRYPPHMNTKISQAEAVHPDELDEEFDTFPTTRNPDMVRLRYDRLRSVAGRIQTVIGDLATQGERFQALLSWRDPRATAIFVILCFIAAIVFFITPIQIVVALAGFFTMRHPRFRHRLPSVPVNFFRRLPARTDSML.

Residues Met-1–Phe-110 enclose the C2 1 domain. Over residues Gln-178–Ala-195 the composition is skewed to polar residues. Residues Gln-178 to His-201 are disordered. 3 C2 domains span residues Ile-261–Tyr-381, Val-421–Tyr-546, and Tyr-587–Tyr-709. Residues Asp-294, Asp-300, Asp-347, Asp-349, and Asp-354 each contribute to the Ca(2+) site. 3 helical membrane passes run Met-812–Trp-832, Leu-846–Ile-866, and Ile-954–Val-974.

This sequence belongs to the MCTP family. The cofactor is Ca(2+). Accumulates specifically in hydathodes. Restricted the basal meristem of roots. Observed in flowers.

Its subcellular location is the membrane. The protein resides in the vesicle. The protein localises to the endosome membrane. May function as a signaling molecule by regulating the trafficking of other regulators. In Arabidopsis thaliana (Mouse-ear cress), this protein is Multiple C2 domain and transmembrane region protein 7.